The sequence spans 522 residues: Glutamate--cysteine ligase (522 aa).

Belongs to the glutamate--cysteine ligase type 1 family. Type 1 subfamily.

It carries out the reaction L-cysteine + L-glutamate + ATP = gamma-L-glutamyl-L-cysteine + ADP + phosphate + H(+). Its pathway is sulfur metabolism; glutathione biosynthesis; glutathione from L-cysteine and L-glutamate: step 1/2. The chain is Glutamate--cysteine ligase from Vibrio campbellii (strain ATCC BAA-1116).